A 314-amino-acid chain; its full sequence is Tyrosine recombinase XerC (314 aa).

The 85-residue stretch at 1–85 (MNEQVEAFLR…AVKSFFTFLT (85 aa)) folds into the Core-binding (CB) domain. Residues 106–291 (DLPRALTPRQ…NHESSHTPHA (186 aa)) enclose the Tyr recombinase domain. Catalysis depends on residues R147, K171, H243, R246, and H269. Residue Y278 is the O-(3'-phospho-DNA)-tyrosine intermediate of the active site. Positions 284–314 (ESSHTPHAHPAPRASEVNGVRDEQALVPEEK) are disordered. Residues 302–314 (GVRDEQALVPEEK) are compositionally biased toward basic and acidic residues.

It belongs to the 'phage' integrase family. XerC subfamily. In terms of assembly, forms a cyclic heterotetrameric complex composed of two molecules of XerC and two molecules of XerD.

The protein resides in the cytoplasm. Its function is as follows. Site-specific tyrosine recombinase, which acts by catalyzing the cutting and rejoining of the recombining DNA molecules. The XerC-XerD complex is essential to convert dimers of the bacterial chromosome into monomers to permit their segregation at cell division. It also contributes to the segregational stability of plasmids. This is Tyrosine recombinase XerC from Roseiflexus castenholzii (strain DSM 13941 / HLO8).